The following is a 545-amino-acid chain: CTP synthase (545 aa).

Residues 1 to 266 are amidoligase domain; the sequence is MTTNYIFVTG…DDYICKRFSL (266 aa). Residue serine 14 participates in CTP binding. Residue serine 14 coordinates UTP. ATP is bound by residues 15–20 and aspartate 72; that span reads SLGKGI. Mg(2+)-binding residues include aspartate 72 and glutamate 140. CTP-binding positions include 147-149, 187-192, and lysine 223; these read DIE and KTKPTQ. Residues 187 to 192 and lysine 223 contribute to the UTP site; that span reads KTKPTQ. Position 239–241 (239–241) interacts with ATP; it reads KDV. The region spanning 291–542 is the Glutamine amidotransferase type-1 domain; the sequence is TIGMVGKYIE…VKAANEHQKR (252 aa). Glycine 352 contributes to the L-glutamine binding site. Cysteine 379 functions as the Nucleophile; for glutamine hydrolysis in the catalytic mechanism. L-glutamine contacts are provided by residues 380–383, glutamate 403, and arginine 470; that span reads LGMQ. Residues histidine 515 and glutamate 517 contribute to the active site.

Belongs to the CTP synthase family. In terms of assembly, homotetramer.

The catalysed reaction is UTP + L-glutamine + ATP + H2O = CTP + L-glutamate + ADP + phosphate + 2 H(+). The enzyme catalyses L-glutamine + H2O = L-glutamate + NH4(+). It catalyses the reaction UTP + NH4(+) + ATP = CTP + ADP + phosphate + 2 H(+). It functions in the pathway pyrimidine metabolism; CTP biosynthesis via de novo pathway; CTP from UDP: step 2/2. With respect to regulation, allosterically activated by GTP, when glutamine is the substrate; GTP has no effect on the reaction when ammonia is the substrate. The allosteric effector GTP functions by stabilizing the protein conformation that binds the tetrahedral intermediate(s) formed during glutamine hydrolysis. Inhibited by the product CTP, via allosteric rather than competitive inhibition. In terms of biological role, catalyzes the ATP-dependent amination of UTP to CTP with either L-glutamine or ammonia as the source of nitrogen. Regulates intracellular CTP levels through interactions with the four ribonucleotide triphosphates. This Salmonella newport (strain SL254) protein is CTP synthase.